Here is a 567-residue protein sequence, read N- to C-terminus: MAHISRTAYANMFGPTTGDRLRLADTELFLEVEKDFTTYGEEVKFGGGKVIRDGMGQSQVVNSECVDVVITNALILDHWGIVKADIGIKDGRIFGIGKAGNPDVQPNVDIVVGPATEVVAGEGKIITAGGVDTHIHFICPQQAEEGLTSGVTTFIGGGTGPVAGTNATTVTPGIWNIHRMLEAVDDLPINVGLFGKGCVSKPEALREQIEAGAMGLKIHEDWGATPAAIHNCLNVADEMDIQIAIHSDTLNEGGFYEETVKAIGDRVIHVFHTEGAGGGHAPDVIKSVGEPNILPASTNPTMPYTINTVDEHLDMLMVCHHLDPSIPEDVAFAESRIRRETIAAEDILHDMGAISVMSSDSQAMGRVGEVIIRTWQCANKMKLQRGILEGDNEHNDNERIKRYVAKYTINPAIAHGISHEVGSVEKGKLADLVLWNPAFFGVKPALVMKSGLVAYAPMGDINAAIPTPQPVHYRPMFACYGKAKFKSSMIFLSQASIEAGVPEKLNLQSQIGEVKGCRNISKKSMIHNSYTPNIELDSQTYEVKADGVPLVCEPATELPMAQRYFLF.

The Urease domain maps to 129 to 567 (GGVDTHIHFI…LPMAQRYFLF (439 aa)). The Ni(2+) site is built by His-134, His-136, and Lys-217. At Lys-217 the chain carries N6-carboxylysine. His-219 provides a ligand contact to substrate. Ni(2+) is bound by residues His-246 and His-272. His-320 functions as the Proton donor in the catalytic mechanism. Asp-360 contacts Ni(2+).

It belongs to the metallo-dependent hydrolases superfamily. Urease alpha subunit family. Heterotrimer of UreA (gamma), UreB (beta) and UreC (alpha) subunits. Three heterotrimers associate to form the active enzyme. Ni cation serves as cofactor. Carboxylation allows a single lysine to coordinate two nickel ions.

It localises to the cytoplasm. The catalysed reaction is urea + 2 H2O + H(+) = hydrogencarbonate + 2 NH4(+). Its pathway is nitrogen metabolism; urea degradation; CO(2) and NH(3) from urea (urease route): step 1/1. The polypeptide is Urease subunit alpha (Aliivibrio fischeri (strain MJ11) (Vibrio fischeri)).